A 168-amino-acid polypeptide reads, in one-letter code: Photosystem I assembly protein Ycf3 (168 aa).

3 TPR repeats span residues 35–68, 72–105, and 120–153; these read AFTY…EIDP, SYIL…NPFL, and GEKA…TPGN.

The protein belongs to the Ycf3 family.

The protein localises to the plastid membrane. In terms of biological role, essential for the assembly of the photosystem I (PSI) complex. May act as a chaperone-like factor to guide the assembly of the PSI subunits. In Cuscuta exaltata (Tall dodder), this protein is Photosystem I assembly protein Ycf3.